The primary structure comprises 566 residues: Proline--tRNA ligase (566 aa).

The protein belongs to the class-II aminoacyl-tRNA synthetase family. ProS type 1 subfamily. In terms of assembly, homodimer.

It is found in the cytoplasm. It catalyses the reaction tRNA(Pro) + L-proline + ATP = L-prolyl-tRNA(Pro) + AMP + diphosphate. Its function is as follows. Catalyzes the attachment of proline to tRNA(Pro) in a two-step reaction: proline is first activated by ATP to form Pro-AMP and then transferred to the acceptor end of tRNA(Pro). As ProRS can inadvertently accommodate and process non-cognate amino acids such as alanine and cysteine, to avoid such errors it has two additional distinct editing activities against alanine. One activity is designated as 'pretransfer' editing and involves the tRNA(Pro)-independent hydrolysis of activated Ala-AMP. The other activity is designated 'posttransfer' editing and involves deacylation of mischarged Ala-tRNA(Pro). The misacylated Cys-tRNA(Pro) is not edited by ProRS. This Staphylococcus haemolyticus (strain JCSC1435) protein is Proline--tRNA ligase.